Consider the following 501-residue polypeptide: MQIKIEGIHDDRLHRPLQNIANLFYEECELAYGGEEPADFVISLALSQTDEHVTVSGEVKGTGIKEQHTKFFSPDMTEKEAFKQVKNTISYVYLNLLQAHTGITQKWGILTGIRPTKLLHKKLQSGMSKEQAHAELKKDYLIHDEKIMLMQEIVDRQLAAVPDLYRVKDEVSIYIGIPFCPTKCAYCTFPAYAIQGQAGRVGSFLWGLHYEMQKIGEWLKEHDVKVTTIYFGGGTPTSITAEEMDLLYEEMVRSFPDVKNIREITVEAGRPDTITEEKLAVLNKYDIDRISINPQSYENETLKAIGRHHTVEETIEKYHLSRQHGMNNINMDLIIGLPGEGVKEFRHSLSETEKLMPESLTVHTLSFKRASEMTRNKHKYKVAGREEVSQMMEDAVAWTKEHGYVPYYLYRQKNILGNLENVGYSLPGQESIYNIMIMEEVQTIIGIGCGAASKFIDRDTGKITHFANPKDPKSYNERFEHYTDEKIKYLEQIFEKTTKQH.

Residues 163–405 (DLYRVKDEVS…VAWTKEHGYV (243 aa)) form the Radical SAM core domain. Y174 contributes to the S-adenosyl-L-methionine binding site. Residues C180 and C184 each coordinate [4Fe-4S] cluster. Y186 is a binding site for S-adenosyl-L-methionine. Residue C187 participates in [4Fe-4S] cluster binding. Residues G233, 234–235 (GT), E267, Q295, R307, and D332 each bind S-adenosyl-L-methionine.

This sequence belongs to the anaerobic coproporphyrinogen-III oxidase family. HemZ subfamily. Requires [4Fe-4S] cluster as cofactor.

The protein operates within porphyrin-containing compound metabolism; protoporphyrin-IX biosynthesis. Involved in the biosynthesis of porphyrin-containing compound. The chain is Oxygen-independent coproporphyrinogen-III oxidase-like protein HemZ (hemZ) from Bacillus subtilis (strain 168).